The primary structure comprises 211 residues: Uracil phosphoribosyltransferase (211 aa).

5-phospho-alpha-D-ribose 1-diphosphate contacts are provided by residues R77, R102, and 129–137 (DPMLATGGS). Uracil is bound by residues I192 and 197 to 199 (GDA). D198 contacts 5-phospho-alpha-D-ribose 1-diphosphate.

This sequence belongs to the UPRTase family. Mg(2+) is required as a cofactor.

The catalysed reaction is UMP + diphosphate = 5-phospho-alpha-D-ribose 1-diphosphate + uracil. It participates in pyrimidine metabolism; UMP biosynthesis via salvage pathway; UMP from uracil: step 1/1. Allosterically activated by GTP. Functionally, catalyzes the conversion of uracil and 5-phospho-alpha-D-ribose 1-diphosphate (PRPP) to UMP and diphosphate. The sequence is that of Uracil phosphoribosyltransferase from Corynebacterium diphtheriae (strain ATCC 700971 / NCTC 13129 / Biotype gravis).